We begin with the raw amino-acid sequence, 225 residues long: Pyrimidine 5'-nucleotidase YjjG (225 aa).

D9 functions as the Nucleophile in the catalytic mechanism.

Belongs to the HAD-like hydrolase superfamily. YjjG family. In terms of assembly, monomer, homodimer and possibly homotetramer in solution. The cofactor is Mn(2+). Mg(2+) serves as cofactor. Requires Co(2+) as cofactor.

Its subcellular location is the cytoplasm. The catalysed reaction is a ribonucleoside 5'-phosphate + H2O = a ribonucleoside + phosphate. It carries out the reaction a 2'-deoxyribonucleoside 5'-phosphate + H2O = a 2'-deoxyribonucleoside + phosphate. It catalyses the reaction UMP + H2O = uridine + phosphate. The enzyme catalyses dUMP + H2O = 2'-deoxyuridine + phosphate. The catalysed reaction is dTMP + H2O = thymidine + phosphate. Its activity is regulated as follows. In contrast to nucleotidases from other families, is not inhibited by ribo- and deoxyribonucleoside di- and triphosphates. Its function is as follows. Nucleotidase that shows high phosphatase activity toward non-canonical pyrimidine nucleotides and three canonical nucleoside 5'-monophosphates (UMP, dUMP, and dTMP), and very low activity against TDP, IMP, UDP, GMP, dGMP, AMP, dAMP, and 6-phosphogluconate. Appears to function as a house-cleaning nucleotidase in vivo, since the general nucleotidase activity of YjjG allows it to protect cells against non-canonical pyrimidine derivatives such as 5-fluoro-2'-deoxyuridine, 5-fluorouridine, 5-fluoroorotate, 5-fluorouracil, and 5-aza-2'-deoxycytidine, and prevents the incorporation of potentially mutagenic nucleotides into DNA. Its dUMP phosphatase activity that catalyzes the hydrolysis of dUMP to deoxyuridine is necessary for thymine utilization via the thymine salvage pathway. Is strictly specific to substrates with 5'-phosphates and shows no activity against nucleoside 2'- or 3'-monophosphates. The polypeptide is Pyrimidine 5'-nucleotidase YjjG (yjjG) (Escherichia coli (strain K12)).